The primary structure comprises 61 residues: Large ribosomal subunit protein eL24 (61 aa).

Residues C7, C10, C33, and C37 each contribute to the Zn(2+) site. The C4-type zinc finger occupies 7-37 (CSFCGGDIPPATGMMHVRNDGTILWFCSNKC).

It belongs to the eukaryotic ribosomal protein eL24 family. Part of the 50S ribosomal subunit. Forms a cluster with proteins L3 and L14. Requires Zn(2+) as cofactor.

Binds to the 23S rRNA. The sequence is that of Large ribosomal subunit protein eL24 from Metallosphaera sedula (strain ATCC 51363 / DSM 5348 / JCM 9185 / NBRC 15509 / TH2).